We begin with the raw amino-acid sequence, 292 residues long: Ribosomal protein L11 methyltransferase (292 aa).

Residues threonine 144, glycine 165, aspartate 187, and asparagine 229 each contribute to the S-adenosyl-L-methionine site.

Belongs to the methyltransferase superfamily. PrmA family.

It is found in the cytoplasm. It carries out the reaction L-lysyl-[protein] + 3 S-adenosyl-L-methionine = N(6),N(6),N(6)-trimethyl-L-lysyl-[protein] + 3 S-adenosyl-L-homocysteine + 3 H(+). Its function is as follows. Methylates ribosomal protein L11. This chain is Ribosomal protein L11 methyltransferase, found in Pseudomonas putida (strain GB-1).